The sequence spans 544 residues: MLNCDMLIDSKELKSTISKLKNEDNYTILLDVTAVDYLKFPDVTPSRFAVIYILRDSTFTKEITIKSYVDDNTLEIDSLYDLYESADWAERETFDQYGIKFVGHPNLKRVLNHHQFIGHPLRKDYKITKGQICTETEDLMDEMVPKLKSKGYKKEEIDDLMLLNVGPSHPASHGTIRNFVAMEGETITACVTEIGYLHRGFEKACEHHTYSQIIPYTDRLNYCSAILNNIGYSKAVEEMLGIEITPRAKMIRVIIGELSRILDHLVCNAANMVDLGGLTNFWYLFSPRDMAYDLLSKLTGARLTNTYTRIGGLEFDLYDGFDKDLEEVLKAVEKGVEDALSLIAHNRIYHDRTQDVGVIKADFALRNGISGPNLRAAGVACDLRKDKPYYGYENFDFDVVIGSHGDVYDRMMCRFEEMRQSTKIIRQAMKNLPDGAINVYAPGVILPSKKDVYGNIEGLMNQFKLTFEGIQVPKGEYYSFSEAANGELGFFIVSDGSGRPYKVKCRPPCFYSLAAYSKIVEGTMLADAVVTMASMNFIAGEFDR.

Residues 1 to 138 (MLNCDMLIDS…KGQICTETED (138 aa)) form an NADH dehydrogenase I subunit C region. Residues 161–544 (MLLNVGPSHP…MNFIAGEFDR (384 aa)) are NADH dehydrogenase I subunit D.

This sequence in the N-terminal section; belongs to the complex I 30 kDa subunit family. It in the C-terminal section; belongs to the complex I 49 kDa subunit family. NDH-1 is composed of 13 different subunits. Subunits NuoB, CD, E, F, and G constitute the peripheral sector of the complex.

Its subcellular location is the cell inner membrane. The enzyme catalyses a quinone + NADH + 5 H(+)(in) = a quinol + NAD(+) + 4 H(+)(out). Its function is as follows. NDH-1 shuttles electrons from NADH, via FMN and iron-sulfur (Fe-S) centers, to quinones in the respiratory chain. The immediate electron acceptor for the enzyme in this species is believed to be ubiquinone. Couples the redox reaction to proton translocation (for every two electrons transferred, four hydrogen ions are translocated across the cytoplasmic membrane), and thus conserves the redox energy in a proton gradient. The chain is NADH-quinone oxidoreductase subunit C/D from Aliarcobacter butzleri (strain RM4018) (Arcobacter butzleri).